Consider the following 1910-residue polypeptide: A disintegrin and metalloproteinase with thrombospondin motifs 20 (1910 aa).

The N-terminal stretch at 1–21 (MWVAKWLTGLLYHLSLFITRS) is a signal peptide. Positions 22-253 (WEVDFHPRQE…DERRHSRKKR (232 aa)) are excised as a propeptide. N-linked (GlcNAc...) asparagine glycosylation is found at Asn92 and Asn191. The region spanning 259–467 (RYIEIMVTAD…GYGECLLDKP (209 aa)) is the Peptidase M12B domain. Disulfide bonds link Cys334–Cys387, Cys363–Cys369, Cys381–Cys462, Cys419–Cys446, Cys489–Cys511, Cys500–Cys521, Cys506–Cys540, Cys534–Cys545, Cys568–Cys605, Cys572–Cys610, and Cys583–Cys595. His403 contacts Zn(2+). Glu404 is an active-site residue. Residues His407 and His413 each coordinate Zn(2+). An N-linked (GlcNAc...) asparagine glycan is attached at Asn445. The region spanning 468–555 (DEEIYNLPSE…VNKETETRPV (88 aa)) is the Disintegrin domain. Residues 556–611 (NGEWGPWEPYSSCSRTCGGGIESATRRCNRPEPRNGGNYCVGRRMKFRSCNTDSCP) enclose the TSP type-1 1 domain. Asn702, Asn717, Asn728, Asn809, and Asn870 each carry an N-linked (GlcNAc...) asparagine glycan. A spacer region spans residues 724 to 846 (TGVFNSSHYG…FNIPLEERSD (123 aa)). TSP type-1 domains follow at residues 846–904 (DMFT…NTDC), 905–961 (ELRW…QELC), 966–1023 (VFTR…FSCP), 1024–1073 (SWAA…SPCE), 1076–1135 (TCAS…TPCS), 1152–1206 (KMAQ…DCFT), 1207–1264 (PCGE…AACP), 1304–1356 (RGNQ…QCGP), 1358–1416 (PCPQ…HACP), 1417–1475 (ADVS…VRCP), 1476–1531 (SWKA…QDCV), 1535–1588 (GMER…NPPC), 1589–1652 (NYIV…INSC), and 1654–1710 (HLAT…NDCK). An N-linked (GlcNAc...) asparagine glycan is attached at Asn1061. Asn1456 is a glycosylation site (N-linked (GlcNAc...) asparagine). N-linked (GlcNAc...) asparagine glycosylation is found at Asn1542 and Asn1572. The region spanning 1711 to 1910 (SFTTCKEIQV…MTTGLPIQVI (200 aa)) is the GON domain. N-linked (GlcNAc...) asparagine glycans are attached at residues Asn1763, Asn1781, and Asn1852.

Zn(2+) is required as a cofactor. Post-translationally, the precursor is cleaved by a furin endopeptidase. Glycosylated. Can be O-fucosylated by POFUT2 on a serine or a threonine residue found within the consensus sequence C1-X(2)-(S/T)-C2-G of the TSP type-1 repeat domains where C1 and C2 are the first and second cysteine residue of the repeat, respectively. Fucosylated repeats can then be further glycosylated by the addition of a beta-1,3-glucose residue by the glucosyltransferase, B3GALTL. Fucosylation mediates the efficient secretion of ADAMTS family members. Can also be C-glycosylated with one or two mannose molecules on tryptophan residues within the consensus sequence W-X-X-W of the TPRs, and N-glycosylated. These other glycosylations can also facilitate secretion. In terms of tissue distribution, very sparingly expressed, although is detected at low levels in testis, prostate, ovary, heart, placenta, lung and pancreas. Overexpressed in several brain, colon and breast carcinomas.

It localises to the secreted. Its subcellular location is the extracellular space. It is found in the extracellular matrix. Functionally, may play a role in tissue-remodeling process occurring in both normal and pathological conditions. May have a protease-independent function in the transport from the endoplasmic reticulum to the Golgi apparatus of secretory cargos, mediated by the GON domain. In Homo sapiens (Human), this protein is A disintegrin and metalloproteinase with thrombospondin motifs 20 (ADAMTS20).